Consider the following 388-residue polypeptide: Probable ubiquitin-conjugating enzyme E2 L709 (388 aa).

One can recognise a UBC core domain in the interval 3–162 (NVHKRVIKDI…GNDLMVQKLF (160 aa)). The active-site Glycyl thioester intermediate is the cysteine 95. The interval 195-388 (VEEKSAKTSK…SSKSSKTGKK (194 aa)) is disordered. Composition is skewed to acidic residues over residues 221–238 (SEEE…DSES) and 246–297 (DVVD…ESEE). Over residues 310–388 (KTTTKSSSTK…SSKSSKTGKK (79 aa)) the composition is skewed to low complexity.

This sequence belongs to the ubiquitin-conjugating enzyme family.

The enzyme catalyses S-ubiquitinyl-[E1 ubiquitin-activating enzyme]-L-cysteine + [E2 ubiquitin-conjugating enzyme]-L-cysteine = [E1 ubiquitin-activating enzyme]-L-cysteine + S-ubiquitinyl-[E2 ubiquitin-conjugating enzyme]-L-cysteine.. Its pathway is protein modification; protein ubiquitination. Its function is as follows. Catalyzes the covalent attachment of ubiquitin to other proteins. This chain is Probable ubiquitin-conjugating enzyme E2 L709, found in Acanthamoeba polyphaga (Amoeba).